The sequence spans 294 residues: Cytidine deaminase (294 aa).

2 CMP/dCMP-type deaminase domains span residues 48-168 and 186-294; these read DEDA…FGPK and LTGD…VLLG. A substrate-binding site is contributed by 89–91; sequence NME. His102 provides a ligand contact to Zn(2+). The active-site Proton donor is Glu104. Zn(2+) is bound by residues Cys129 and Cys132.

The protein belongs to the cytidine and deoxycytidylate deaminase family. In terms of assembly, homodimer. It depends on Zn(2+) as a cofactor.

It carries out the reaction cytidine + H2O + H(+) = uridine + NH4(+). The enzyme catalyses 2'-deoxycytidine + H2O + H(+) = 2'-deoxyuridine + NH4(+). In terms of biological role, this enzyme scavenges exogenous and endogenous cytidine and 2'-deoxycytidine for UMP synthesis. This Salmonella dublin (strain CT_02021853) protein is Cytidine deaminase.